The primary structure comprises 378 residues: Ribosomal RNA large subunit methyltransferase G (378 aa).

Belongs to the methyltransferase superfamily. RlmG family.

It localises to the cytoplasm. It carries out the reaction guanosine(1835) in 23S rRNA + S-adenosyl-L-methionine = N(2)-methylguanosine(1835) in 23S rRNA + S-adenosyl-L-homocysteine + H(+). Its function is as follows. Specifically methylates the guanine in position 1835 (m2G1835) of 23S rRNA. The sequence is that of Ribosomal RNA large subunit methyltransferase G from Salmonella paratyphi A (strain ATCC 9150 / SARB42).